Consider the following 282-residue polypeptide: Nicotianamine synthase-like 5 protein (282 aa).

It belongs to the nicotianamine synthase (NAS)-like family.

In Hordeum vulgare (Barley), this protein is Nicotianamine synthase-like 5 protein (NAS5).